The following is a 247-amino-acid chain: Ice-binding protein (247 aa).

The first 19 residues, 1–19 (MTFSILSIFVFGLISSSVA), serve as a signal peptide directing secretion. N-linked (GlcNAc...) asparagine glycosylation occurs at Asn219.

Belongs to the ice-binding protein family.

It is found in the secreted. In terms of biological role, binds ice crystals and most probably inhibits their growth in order to prevent cell damage from extracellular ice. The sequence is that of Ice-binding protein from Flammulina populicola (Enokitake mushroom).